A 286-amino-acid chain; its full sequence is tRNA (guanine-N(7)-)-methyltransferase (286 aa).

Residues Gly-91, Glu-114–Ile-115, Asn-158–Ser-159, and Leu-178 contribute to the S-adenosyl-L-methionine site. Asp-181 is a catalytic residue. Thr-256–Glu-258 is a binding site for S-adenosyl-L-methionine.

It belongs to the class I-like SAM-binding methyltransferase superfamily. TrmB family. Forms a complex with TRM82.

It is found in the nucleus. The enzyme catalyses guanosine(46) in tRNA + S-adenosyl-L-methionine = N(7)-methylguanosine(46) in tRNA + S-adenosyl-L-homocysteine. It functions in the pathway tRNA modification; N(7)-methylguanine-tRNA biosynthesis. Its function is as follows. Catalyzes the formation of N(7)-methylguanine at position 46 (m7G46) in tRNA. The chain is tRNA (guanine-N(7)-)-methyltransferase from Cryptococcus neoformans var. neoformans serotype D (strain B-3501A) (Filobasidiella neoformans).